The following is a 525-amino-acid chain: Mannuronan C5-epimerase AlgG (525 aa).

Residues 1 to 29 (MNVQRKLASTQLKPVLLGVLLATSAWSQA) form the signal peptide. 5 PbH1 repeats span residues 287 to 309 (ADDV…DPHD), 311 to 334 (SERL…IVSR), 336 to 358 (VNNS…VLDR), 360 to 382 (SEHN…TLYE), and 383 to 405 (SSNN…RMRN). The Proton acceptor role is filled by H308.

The protein belongs to the D-mannuronate C5-epimerase family.

The protein resides in the periplasm. It catalyses the reaction [(1-&gt;4)-beta-D-mannuronosyl](n) = [alginate](n). The protein operates within glycan biosynthesis; alginate biosynthesis. With respect to regulation, inhibited by zinc. Catalyzes the epimerization of beta-D-mannuronate to alpha-L-guluronate during the synthesis of the linear polysaccharide alginate. In addition, is part of a periplasmic protein complex that protects alginate from degradation by AlgL by channeling the newly formed alginate polymer through a scaffold that transfers the alginate polymer through the periplasmic space to the outer membrane secretin AlgE. The protein is Mannuronan C5-epimerase AlgG of Azotobacter vinelandii.